We begin with the raw amino-acid sequence, 382 residues long: Galactokinase (382 aa).

Substrate is bound at residue 34-37 (EHTD). 124 to 130 (GAGLSSS) is a binding site for ATP. Mg(2+) is bound by residues Ser130 and Glu162. Catalysis depends on Asp174, which acts as the Proton acceptor. Tyr223 contacts substrate.

It belongs to the GHMP kinase family. GalK subfamily.

It localises to the cytoplasm. It catalyses the reaction alpha-D-galactose + ATP = alpha-D-galactose 1-phosphate + ADP + H(+). The protein operates within carbohydrate metabolism; galactose metabolism. Catalyzes the transfer of the gamma-phosphate of ATP to D-galactose to form alpha-D-galactose-1-phosphate (Gal-1-P). This chain is Galactokinase, found in Escherichia coli O7:K1 (strain IAI39 / ExPEC).